The sequence spans 310 residues: Quinolinate synthase 2 (310 aa).

Residues His-30 and Ser-47 each contribute to the iminosuccinate site. Position 92 (Cys-92) interacts with [4Fe-4S] cluster. Iminosuccinate is bound by residues 118-120 (YVN) and Ser-135. Cys-177 lines the [4Fe-4S] cluster pocket. Residues 203–205 (HPE) and Thr-220 each bind iminosuccinate. Residue Cys-265 coordinates [4Fe-4S] cluster.

It belongs to the quinolinate synthase family. Type 2 subfamily. [4Fe-4S] cluster is required as a cofactor.

The protein localises to the cytoplasm. It catalyses the reaction iminosuccinate + dihydroxyacetone phosphate = quinolinate + phosphate + 2 H2O + H(+). It participates in cofactor biosynthesis; NAD(+) biosynthesis; quinolinate from iminoaspartate: step 1/1. Functionally, catalyzes the condensation of iminoaspartate with dihydroxyacetone phosphate to form quinolinate. The polypeptide is Quinolinate synthase 2 (Methanosarcina acetivorans (strain ATCC 35395 / DSM 2834 / JCM 12185 / C2A)).